The chain runs to 68 residues: Putative membrane protein insertion efficiency factor (68 aa).

It belongs to the UPF0161 family.

Its subcellular location is the cell membrane. Functionally, could be involved in insertion of integral membrane proteins into the membrane. This chain is Putative membrane protein insertion efficiency factor, found in Syntrophomonas wolfei subsp. wolfei (strain DSM 2245B / Goettingen).